The following is a 274-amino-acid chain: Diaminopimelate epimerase (274 aa).

Residues N11, Q44, and N64 each contribute to the substrate site. C73 functions as the Proton donor in the catalytic mechanism. Substrate contacts are provided by residues 74 to 75 (GN), N157, N190, and 208 to 209 (ER). The Proton acceptor role is filled by C217. Position 218-219 (218-219 (GS)) interacts with substrate.

The protein belongs to the diaminopimelate epimerase family. In terms of assembly, homodimer.

The protein resides in the cytoplasm. The enzyme catalyses (2S,6S)-2,6-diaminopimelate = meso-2,6-diaminopimelate. It participates in amino-acid biosynthesis; L-lysine biosynthesis via DAP pathway; DL-2,6-diaminopimelate from LL-2,6-diaminopimelate: step 1/1. In terms of biological role, catalyzes the stereoinversion of LL-2,6-diaminopimelate (L,L-DAP) to meso-diaminopimelate (meso-DAP), a precursor of L-lysine and an essential component of the bacterial peptidoglycan. In Glaesserella parasuis serovar 5 (strain SH0165) (Haemophilus parasuis), this protein is Diaminopimelate epimerase.